An 836-amino-acid chain; its full sequence is Probable ribonuclease ZC3H12B (836 aa).

Residues 1–92 (MTATAEVETP…SPCLDRPSFS (92 aa)) are disordered. The segment covering 8 to 28 (ETPKMEKSASKEEKQQPKQDS) has biased composition (basic and acidic residues). Residues 35 to 46 (DSEEWMSSESDP) show a composition bias toward acidic residues. Over residues 50–60 (SLKSSDNSKSC) the composition is skewed to polar residues. Residues 70–80 (KEMHSKPHRQL) are compositionally biased toward basic residues. Residues 190 to 345 (LRPVVIDGSN…LGRHGPSLEN (156 aa)) form the RNase NYN domain. The C3H1-type zinc finger occupies 355 to 380 (EHKKQPCPYGKKCTYGHKCKYYHPER).

The protein belongs to the ZC3H12 family. Requires Mg(2+) as cofactor.

May function as RNase and regulate the levels of target RNA species. This Homo sapiens (Human) protein is Probable ribonuclease ZC3H12B (ZC3H12B).